The chain runs to 105 residues: Synaptic plasticity regulator PANTS (105 aa).

The protein belongs to the UPF0545 family. As to quaternary structure, interacts with RTN4 isoform A/Nogo-A; the interaction results in enhanced RTN4-mediated inhibition of AMPA receptor clustering. Also interacts with NCAM1, RANBP2 and CCT8. In terms of processing, rapidly degraded by proteolysis following neuronal stimulation, resulting in increased AMPA receptor clustering.

The protein localises to the synapse. The protein resides in the synaptic cleft. In terms of biological role, negatively regulates long-term potentiation and modulates adult synaptic plasticity. Stabilizes the interaction of RTN4 isoform A/Nogo-A with its receptors, inhibiting clustering of postsynaptic AMPA receptors at synaptic sites. Upon neuronal stimulation, degraded at synapses, reducing RTN4 signaling and allowing AMPA receptor clustering at individual synapses. The sequence is that of Synaptic plasticity regulator PANTS from Pongo abelii (Sumatran orangutan).